The following is a 425-amino-acid chain: Phosphoribosylamine--glycine ligase (425 aa).

In terms of domain architecture, ATP-grasp spans 109-315 (KALMQEAGIP…LEELILACVQ (207 aa)). 135–195 (IQAQGAPIVV…EECLTGQEVS (61 aa)) is a binding site for ATP. Glu-285 and Asn-287 together coordinate Mg(2+).

The protein belongs to the GARS family. Mg(2+) is required as a cofactor. It depends on Mn(2+) as a cofactor.

It carries out the reaction 5-phospho-beta-D-ribosylamine + glycine + ATP = N(1)-(5-phospho-beta-D-ribosyl)glycinamide + ADP + phosphate + H(+). The protein operates within purine metabolism; IMP biosynthesis via de novo pathway; N(1)-(5-phospho-D-ribosyl)glycinamide from 5-phospho-alpha-D-ribose 1-diphosphate: step 2/2. In Nostoc sp. (strain PCC 7120 / SAG 25.82 / UTEX 2576), this protein is Phosphoribosylamine--glycine ligase.